The following is a 299-amino-acid chain: Acetaldehyde dehydrogenase 1 (299 aa).

Cys130 (acyl-thioester intermediate) is an active-site residue. NAD(+)-binding positions include 161-169 (SVGPGTRKN) and Asn272.

This sequence belongs to the acetaldehyde dehydrogenase family.

It catalyses the reaction acetaldehyde + NAD(+) + CoA = acetyl-CoA + NADH + H(+). The sequence is that of Acetaldehyde dehydrogenase 1 (mhpF) from Burkholderia cenocepacia (strain ATCC BAA-245 / DSM 16553 / LMG 16656 / NCTC 13227 / J2315 / CF5610) (Burkholderia cepacia (strain J2315)).